Reading from the N-terminus, the 276-residue chain is Phosphatidylcholine synthase (276 aa).

Over 1-30 the chain is Cytoplasmic; that stretch reads MGGQKEMADSVKTKLTGKLKAKKVTAPQAK. Residues 31-51 form a helical membrane-spanning segment; it reads AFSVHLLTASGSFLAFLSVVA. Over 52–57 the chain is Periplasmic; sequence ASDGRY. The helical transmembrane segment at 58–78 threads the bilayer; sequence TAMWWWLGLALFVDGIDGPIA. Residues 79 to 91 lie on the Cytoplasmic side of the membrane; the sequence is RKLEVKYVLPNWS. A helical membrane pass occupies residues 92-112; it reads GELLDSIIDYVTYVLIPAFAL. The Periplasmic portion of the chain corresponds to 113–115; it reads YQS. A helical transmembrane segment spans residues 116-136; sequence GFMGTNLSFISGAIIVVSSAI. The Cytoplasmic portion of the chain corresponds to 137–146; it reads YYADTGMKTK. A helical membrane pass occupies residues 147-167; sequence ENFFKGFPVVWNMVVFTLFIV. Topologically, residues 168–171 are periplasmic; the sequence is RPGE. A helical transmembrane segment spans residues 172-192; sequence WVAFGTVVASAILSFLPINFL. Residues 193-202 lie on the Cytoplasmic side of the membrane; it reads HPVRVVRLRP. Residues 203–223 traverse the membrane as a helical segment; that stretch reads LNLTIFLLWCAFGVIALYYML. The Periplasmic portion of the chain corresponds to 224–230; that stretch reads DAPLWVR. A helical membrane pass occupies residues 231–251; sequence IGISVTGLYIYFIGAIMQLFP. Topologically, residues 252–276 are cytoplasmic; it reads SLGREAALAKARKLVEKQQKSGEAP.

Belongs to the CDP-alcohol phosphatidyltransferase class-I family. Mn(2+) serves as cofactor.

Its subcellular location is the cell inner membrane. It catalyses the reaction a CDP-1,2-diacyl-sn-glycerol + choline = a 1,2-diacyl-sn-glycero-3-phosphocholine + CMP + H(+). Condenses choline with CDP-diglyceride to produce phosphatidylcholine and CMP. The protein is Phosphatidylcholine synthase of Brucella melitensis biotype 1 (strain ATCC 23456 / CCUG 17765 / NCTC 10094 / 16M).